A 64-amino-acid polypeptide reads, in one-letter code: Conotoxin Cal12.4 (64 aa).

The N-terminal stretch at Met-1 to Ala-21 is a signal peptide.

The protein belongs to the conotoxin O1 superfamily. Contains 4 disulfide bonds. Expressed by the venom duct.

It localises to the secreted. Functionally, probable neurotoxin. The protein is Conotoxin Cal12.4 of Californiconus californicus (California cone).